The primary structure comprises 71 residues: Biotinylated protein TB7.3 (71 aa).

Residues 2–71 (AEDVRAEIVA…QAGDLIAVIS (70 aa)) enclose the Biotinyl-binding domain. N6-biotinyllysine is present on lysine 37.

The chain is Biotinylated protein TB7.3 from Mycobacterium bovis (strain ATCC BAA-935 / AF2122/97).